The following is a 729-amino-acid chain: U-box domain-containing protein 17 (729 aa).

A U-box domain is found at 304-378 (TVPKDFVCPI…VQWCTASGIS (75 aa)). ARM repeat units lie at residues 438-477 (KENR…NLSI), 479-520 (EKNK…SLSA), 523-562 (EYKK…NLST), and 564-601 (PDNC…LLVR).

It catalyses the reaction S-ubiquitinyl-[E2 ubiquitin-conjugating enzyme]-L-cysteine + [acceptor protein]-L-lysine = [E2 ubiquitin-conjugating enzyme]-L-cysteine + N(6)-ubiquitinyl-[acceptor protein]-L-lysine.. The protein operates within protein modification; protein ubiquitination. Its function is as follows. Functions as an E3 ubiquitin ligase. This chain is U-box domain-containing protein 17 (PUB17), found in Arabidopsis thaliana (Mouse-ear cress).